We begin with the raw amino-acid sequence, 318 residues long: Glycine--tRNA ligase alpha subunit (318 aa).

A disordered region spans residues 298–318 (EAGGSSPSTSRQGEAPRGESQ). A compositionally biased stretch (polar residues) spans 300 to 309 (GGSSPSTSRQ).

This sequence belongs to the class-II aminoacyl-tRNA synthetase family. Tetramer of two alpha and two beta subunits.

It is found in the cytoplasm. It carries out the reaction tRNA(Gly) + glycine + ATP = glycyl-tRNA(Gly) + AMP + diphosphate. In Rhodopseudomonas palustris (strain BisB18), this protein is Glycine--tRNA ligase alpha subunit.